A 1382-amino-acid polypeptide reads, in one-letter code: Insulin receptor (1382 aa).

The N-terminal stretch at 1–27 is a signal peptide; that stretch reads MATGGRRGAAAAPLLVAVAALLLGAAG. Extracellular segments follow at residues 28–758 and 763–956; these read HLYP…PRPS and SLGD…NIAK. C35 and C53 are disulfide-bonded. 4 N-linked (GlcNAc...) asparagine glycosylation sites follow: N43, N52, N105, and N138. Cystine bridges form between C153-C182, C186-C209, C196-C215, C219-C228, C223-C234, C235-C243, C239-C252, C255-C264, and C268-C280. Residue N242 is glycosylated (N-linked (GlcNAc...) asparagine). N-linked (GlcNAc...) asparagine glycosylation is present at N282. 5 disulfide bridges follow: C286/C311, C293/C301, C315/C328, C331/C335, and C339/C360. N322 carries N-linked (GlcNAc...) asparagine glycosylation. N364 is a glycosylation site (N-linked (GlcNAc...) asparagine). Phosphoserine is present on S400. Y401 carries the phosphotyrosine modification. S407 is modified (phosphoserine). N-linked (GlcNAc...) asparagine glycosylation is found at N424 and N445. An intrachain disulfide couples C462 to C495. 4 N-linked (GlcNAc...) asparagine glycosylation sites follow: N541, N633, N651, and N698. Positions 624–726 constitute a Fibronectin type-III 1 domain; it reads VPLDPISVSN…SQILKELEES (103 aa). 2 disulfide bridges follow: C674–C899 and C825–C834. The disordered stretch occupies residues 686–708; the sequence is SPPFESEDSQKHNQSEYEDSAGE. The segment at 733 to 741 is insulin-binding; that stretch reads EDYLHNVVF. A disordered region spans residues 746-766; the sequence is TSSGTGAEDPRPSRKRRSLGD. Fibronectin type-III domains lie at 757–842 and 853–947; these read PSRK…YVSA and IVGP…VTDY. 2 N-linked (GlcNAc...) asparagine glycosylation sites follow: N769 and N782. 2 N-linked (GlcNAc...) asparagine glycosylation sites follow: N920 and N933. The helical transmembrane segment at 957-979 threads the bilayer; sequence IIIGPLIFVFLFSVVIGSIYLFL. At 980–1382 the chain is on the cytoplasmic side; it reads RKRQPDGPLG…ILTLPRSNPS (403 aa). Residues Y992, Y999, and Y1011 each carry the phosphotyrosine; by autocatalysis modification. Residue Y999 is a region of interest, important for interaction with IRS1, SHC1 and STAT5B. Positions 1023-1298 constitute a Protein kinase domain; it reads ITLLRELGQG…LLKDDLHPSF (276 aa). Residues S1033 and K1057 each contribute to the ATP site. A Glycyl lysine isopeptide (Lys-Gly) (interchain with G-Cter in ubiquitin) cross-link involves residue K1079. Position 1083 is an S-nitrosocysteine (C1083). Position 1104–1110 (1104–1110) interacts with ATP; that stretch reads ELMAHGD. The Proton donor/acceptor role is filled by D1159. ATP is bound by residues 1163 to 1164 and D1177; that span reads RN. Residues Y1185, Y1189, Y1190, Y1355, and Y1361 each carry the phosphotyrosine; by autocatalysis modification. Residues 1360–1382 form a disordered region; that stretch reads PYTHMNGGKKNGRILTLPRSNPS. A PIK3R1-binding region spans residues 1361–1364; that stretch reads YTHM.

It belongs to the protein kinase superfamily. Tyr protein kinase family. Insulin receptor subfamily. As to quaternary structure, tetramer of 2 alpha and 2 beta chains linked by disulfide bonds. The alpha chains carry the insulin-binding regions, while the beta chains carry the kinase domain. Forms a hybrid receptor with IGF1R, the hybrid is a tetramer consisting of 1 alpha chain and 1 beta chain of INSR and 1 alpha chain and 1 beta chain of IGF1R. Interacts with SORBS1 but dissociates from it following insulin stimulation. Binds SH2B2. Activated form of INSR interacts (via Tyr-999) with the PTB/PID domains of IRS1 and SHC1. The sequences surrounding the phosphorylated NPXY motif contribute differentially to either IRS1 or SHC1 recognition. Interacts (via tyrosines in the C-terminus) with IRS2 (via PTB domain and 591-786 AA); the 591-786 would be the primary anchor of IRS2 to INSR while the PTB domain would have a stabilizing action on the interaction with INSR. Interacts with the SH2 domains of the 85 kDa regulatory subunit of PI3K (PIK3R1) in vitro, when autophosphorylated on tyrosine residues. Interacts with SOCS7. Interacts (via the phosphorylated Tyr-999), with SOCS3. Interacts (via the phosphorylated Tyr-1185, Tyr-1189, Tyr-1190) with SOCS1. Interacts with CAV2 (tyrosine-phosphorylated form); the interaction is increased with 'Tyr-27'phosphorylation of CAV2. Interacts with ARRB2. Interacts with GRB10; this interaction blocks the association between IRS1/IRS2 and INSR, significantly reduces insulin-stimulated tyrosine phosphorylation of IRS1 and IRS2 and thus decreases insulin signaling. Interacts with GRB7. Interacts with PDPK1. Interacts (via Tyr-1190) with GRB14 (via BPS domain); this interaction protects the tyrosines in the activation loop from dephosphorylation, but promotes dephosphorylation of Tyr-999, this results in decreased interaction with, and phosphorylation of, IRS1. Interacts (via subunit alpha) with ENPP1 (via 485-599 AA); this interaction blocks autophosphorylation. Interacts with PTPRE; this interaction is dependent of Tyr-1185, Tyr-1189 and Tyr-1190 of the INSR. Interacts with STAT5B (via SH2 domain). Interacts with PTPRF. Interacts with ATIC; ATIC together with PRKAA2/AMPK2 and HACD3/PTPLAD1 is proposed to be part of a signaling netwok regulating INSR autophosphorylation and endocytosis. Interacts with the cone snail venom insulin Con-Ins G1. Interacts with the insulin receptor SORL1; this interaction strongly increases its surface exposure, hence strengthens insulin signal reception. Interacts (tyrosine phosphorylated) with CCDC88A/GIV (via SH2-like region); binding requires autophosphorylation of the INSR C-terminal region. Interacts with GNAI3; the interaction is probably mediated by CCDC88A/GIV. Interacts with LMBRD1. Interacts (in response to insulin stimulation) with NCK1; this interaction may recruit PTPN1 to mediate INSR dephosphorylation. Interacts with CD248; this interaction diminishes INSR autophosphorylation. After being transported from the endoplasmic reticulum to the Golgi apparatus, the single glycosylated precursor is further glycosylated and then cleaved, followed by its transport to the plasma membrane. In terms of processing, autophosphorylated on tyrosine residues in response to insulin. Phosphorylation of Tyr-999 is required for binding to IRS1, SHC1 and STAT5B. Dephosphorylated by PTPRE at Tyr-999, Tyr-1185, Tyr-1189 and Tyr-1190. May also be phosphorylated at Tyr-1185 and Tyr-1190 by mTORC2. Dephosphorylated by PTPRF and PTPN1. Dephosphorylated by PTPN2; down-regulates insulin-induced signaling. Dephosphorylation at Tyr-1189 and Tyr-1190 requires the SH2/SH3 adapter protein NCK1, probably to recruit its interaction partner PTPN1. Post-translationally, S-nitrosylation at Cys-1083 by BLVRB inhibits the receptor tyrosine kinase, thereby inhibiting insulin signaling. Ubiquitinated by MARCHF1; leading to degradation thereby reducing surface INSR expression. In terms of tissue distribution, isoform Long and isoform Short are predominantly expressed in tissue targets of insulin metabolic effects: liver, adipose tissue and skeletal muscle but are also expressed in the peripheral nerve, kidney, pulmonary alveoli, pancreatic acini, placenta vascular endothelium, fibroblasts, monocytes, granulocytes, erythrocytes and skin. Isoform Short is preferentially expressed in fetal cells such as fetal fibroblasts, muscle, liver and kidney. Found as a hybrid receptor with IGF1R in muscle, heart, kidney, adipose tissue, skeletal muscle, hepatoma, fibroblasts, spleen and placenta (at protein level). Overexpressed in several tumors, including breast, colon, lung, ovary, and thyroid carcinomas.

The protein resides in the cell membrane. It is found in the late endosome. Its subcellular location is the lysosome. It carries out the reaction L-tyrosyl-[protein] + ATP = O-phospho-L-tyrosyl-[protein] + ADP + H(+). Activated in response to insulin. Autophosphorylation activates the kinase activity. PTPN1, PTPRE and PTPRF dephosphorylate important tyrosine residues, thereby reducing INSR activity. Inhibited by ENPP1. GRB10 and GRB14 inhibit the catalytic activity of the INSR, they block access of substrates to the activated receptor. SOCS1 and SOCS3 act as negative regulators of INSR activity, they bind to the activated INRS and interfere with the phosphorylation of INSR substrates. In terms of biological role, receptor tyrosine kinase which mediates the pleiotropic actions of insulin. Binding of insulin leads to phosphorylation of several intracellular substrates, including, insulin receptor substrates (IRS1, 2, 3, 4), SHC, GAB1, CBL and other signaling intermediates. Each of these phosphorylated proteins serve as docking proteins for other signaling proteins that contain Src-homology-2 domains (SH2 domain) that specifically recognize different phosphotyrosine residues, including the p85 regulatory subunit of PI3K and SHP2. Phosphorylation of IRSs proteins lead to the activation of two main signaling pathways: the PI3K-AKT/PKB pathway, which is responsible for most of the metabolic actions of insulin, and the Ras-MAPK pathway, which regulates expression of some genes and cooperates with the PI3K pathway to control cell growth and differentiation. Binding of the SH2 domains of PI3K to phosphotyrosines on IRS1 leads to the activation of PI3K and the generation of phosphatidylinositol-(3, 4, 5)-triphosphate (PIP3), a lipid second messenger, which activates several PIP3-dependent serine/threonine kinases, such as PDPK1 and subsequently AKT/PKB. The net effect of this pathway is to produce a translocation of the glucose transporter SLC2A4/GLUT4 from cytoplasmic vesicles to the cell membrane to facilitate glucose transport. Moreover, upon insulin stimulation, activated AKT/PKB is responsible for: anti-apoptotic effect of insulin by inducing phosphorylation of BAD; regulates the expression of gluconeogenic and lipogenic enzymes by controlling the activity of the winged helix or forkhead (FOX) class of transcription factors. Another pathway regulated by PI3K-AKT/PKB activation is mTORC1 signaling pathway which regulates cell growth and metabolism and integrates signals from insulin. AKT mediates insulin-stimulated protein synthesis by phosphorylating TSC2 thereby activating mTORC1 pathway. The Ras/RAF/MAP2K/MAPK pathway is mainly involved in mediating cell growth, survival and cellular differentiation of insulin. Phosphorylated IRS1 recruits GRB2/SOS complex, which triggers the activation of the Ras/RAF/MAP2K/MAPK pathway. In addition to binding insulin, the insulin receptor can bind insulin-like growth factors (IGFI and IGFII). Isoform Short has a higher affinity for IGFII binding. When present in a hybrid receptor with IGF1R, binds IGF1. PubMed:12138094 shows that hybrid receptors composed of IGF1R and INSR isoform Long are activated with a high affinity by IGF1, with low affinity by IGF2 and not significantly activated by insulin, and that hybrid receptors composed of IGF1R and INSR isoform Short are activated by IGF1, IGF2 and insulin. In contrast, PubMed:16831875 shows that hybrid receptors composed of IGF1R and INSR isoform Long and hybrid receptors composed of IGF1R and INSR isoform Short have similar binding characteristics, both bind IGF1 and have a low affinity for insulin. In adipocytes, inhibits lipolysis. In Homo sapiens (Human), this protein is Insulin receptor (INSR).